Here is a 310-residue protein sequence, read N- to C-terminus: Ribonuclease Z (310 aa).

Positions 64, 66, 68, 69, 142, 213, and 271 each coordinate Zn(2+). Aspartate 68 serves as the catalytic Proton acceptor.

This sequence belongs to the RNase Z family. In terms of assembly, homodimer. Requires Zn(2+) as cofactor.

It carries out the reaction Endonucleolytic cleavage of RNA, removing extra 3' nucleotides from tRNA precursor, generating 3' termini of tRNAs. A 3'-hydroxy group is left at the tRNA terminus and a 5'-phosphoryl group is left at the trailer molecule.. Its function is as follows. Zinc phosphodiesterase, which displays some tRNA 3'-processing endonuclease activity. Probably involved in tRNA maturation, by removing a 3'-trailer from precursor tRNA. This Treponema pallidum (strain Nichols) protein is Ribonuclease Z.